Reading from the N-terminus, the 170-residue chain is ATP synthase subunit b (170 aa).

The chain crosses the membrane as a helical span at residues 30–50 (FFFVLAIFLVVLGVIGTFVVP).

Belongs to the ATPase B chain family. F-type ATPases have 2 components, F(1) - the catalytic core - and F(0) - the membrane proton channel. F(1) has five subunits: alpha(3), beta(3), gamma(1), delta(1), epsilon(1). F(0) has three main subunits: a(1), b(2) and c(10-14). The alpha and beta chains form an alternating ring which encloses part of the gamma chain. F(1) is attached to F(0) by a central stalk formed by the gamma and epsilon chains, while a peripheral stalk is formed by the delta and b chains.

The protein resides in the cell membrane. F(1)F(0) ATP synthase produces ATP from ADP in the presence of a proton or sodium gradient. F-type ATPases consist of two structural domains, F(1) containing the extramembraneous catalytic core and F(0) containing the membrane proton channel, linked together by a central stalk and a peripheral stalk. During catalysis, ATP synthesis in the catalytic domain of F(1) is coupled via a rotary mechanism of the central stalk subunits to proton translocation. In terms of biological role, component of the F(0) channel, it forms part of the peripheral stalk, linking F(1) to F(0). The chain is ATP synthase subunit b from Mycobacterium leprae (strain TN).